A 420-amino-acid chain; its full sequence is Diaminopimelate decarboxylase (420 aa).

Lys-54 is subject to N6-(pyridoxal phosphate)lysine. Position 191 (His-191) interacts with substrate. Residues Gly-227 and 268–271 (EPGR) contribute to the pyridoxal 5'-phosphate site. Substrate-binding residues include Arg-271, Arg-307, and Tyr-311. Residue Cys-342 is the Proton donor of the active site. 2 residues coordinate substrate: Glu-343 and Tyr-378. Tyr-378 contacts pyridoxal 5'-phosphate.

This sequence belongs to the Orn/Lys/Arg decarboxylase class-II family. LysA subfamily. It depends on pyridoxal 5'-phosphate as a cofactor.

The catalysed reaction is meso-2,6-diaminopimelate + H(+) = L-lysine + CO2. It functions in the pathway amino-acid biosynthesis; L-lysine biosynthesis via DAP pathway; L-lysine from DL-2,6-diaminopimelate: step 1/1. Is activated by 2,3-dimercaptopropan-1-ol. Specifically catalyzes the decarboxylation of meso-diaminopimelate (meso-DAP) to L-lysine. Is not active against the DD- or LL-isomers of diaminopimelate. The polypeptide is Diaminopimelate decarboxylase (Escherichia coli (strain K12)).